Here is a 151-residue protein sequence, read N- to C-terminus: UPF0178 protein PSHAb0045 (151 aa).

The protein belongs to the UPF0178 family.

The polypeptide is UPF0178 protein PSHAb0045 (Pseudoalteromonas translucida (strain TAC 125)).